We begin with the raw amino-acid sequence, 279 residues long: uncharacterized protein (279 aa).

The protein belongs to the PhzF family.

This is an uncharacterized protein from Vibrio cholerae serotype O1 (strain ATCC 39315 / El Tor Inaba N16961).